The chain runs to 175 residues: Transcriptional regulator GadE (175 aa).

Residues H109–Y174 form the HTH luxR-type domain. The segment at residues E133 to F152 is a DNA-binding region (H-T-H motif).

In terms of biological role, regulates the expression of several genes involved in acid resistance. Required for the expression of gadA and gadBC, among others, regardless of media or growth conditions. Binds directly to the 20 bp GAD box found in the control regions of both loci. Could be involved in the regulation of the genes coding for the type III secretion system in enterohaemorragic strains. In Escherichia coli O157:H7, this protein is Transcriptional regulator GadE (gadE).